A 514-amino-acid polypeptide reads, in one-letter code: MKFLLVLIILYNILNSAHSAPTITAVSNGKFGVPTYITITGTGFTGTPVVTIGGQTCDPVIVANTASLQCQFSAQLAPGNSNFDVIVKVGGVPSTGGNGLFKYTPPTLSTIFPNNGRIGMILVDGPSNISGYKLNVNDSINSAMLSVTADSVSPTIYFLVPNTIAGGLLNLELIQPFGFSTIVTSKSVFSPTITSITPLAFDLTPTNVTVTGKYFGTTASVTMGSHIYTGLTVQDDGTNCHVIFTTRSVYESSNTITAKASTGVDMIYLDNQGNQQPITFTYNPPTITSTKQVNDSVEISTTNTGTDFTQISLTMGTSSPTNLVITGTNEKIVITLPHALPEGEIQFNLKAGISNVVTSTLLVTPVINSVTQAPHNGGSITISGIFLNNAHVSIVVDQNTTDIVCAPDSNGESIICPVEAGSGTINLVVTNYKNFASDPTIKTEATTSTTYTIPDTPTPTDTATPSPTPTETATPSPTPKPTSTPEETEAPSSATTLISPLSLIVIFISFVLLI.

Residues 1–19 (MKFLLVLIILYNILNSAHS) form the signal peptide. The segment at 20–453 (APTITAVSNG…EATTSTTYTI (434 aa)) is globular. The IPT/TIG 1 domain maps to 21–104 (PTITAVSNGK…TGGNGLFKYT (84 aa)). 5 N-linked (GlcNAc...) asparagine glycosylation sites follow: Asn-128, Asn-137, Asn-207, Asn-294, and Asn-399. The IPT/TIG 2 domain maps to 191–283 (PTITSITPLA…NQQPITFTYN (93 aa)). 2 stretches are compositionally biased toward low complexity: residues 446 to 475 (TTST…TATP) and 483 to 494 (STPEETEAPSSA). The interval 446–494 (TTSTTYTIPDTPTPTDTATPSPTPTETATPSPTPKPTSTPEETEAPSSA) is disordered. 2 repeat units span residues 462–469 (TATPSPTP) and 472–479 (TATPSPTP). Residues 462-479 (TATPSPTPTETATPSPTP) form a 2 X 8 AA repeats, Pro-rich region. Ser-492 is lipidated: GPI-like-anchor amidated serine. Positions 493 to 514 (SATTLISPLSLIVIFISFVLLI) are cleaved as a propeptide — removed in mature form.

Phosphorylated on serine and N-glycosylated with two types of oligosaccharide chains. In terms of processing, the GPI-like-anchor contains a phosphoceramide group, rather than a phosphatidyl group.

It localises to the cell membrane. In terms of biological role, this cell-surface glycoprotein mediates cell-cell binding via homophilic interaction. The protein is Contact site A protein (csaA) of Dictyostelium discoideum (Social amoeba).